A 360-amino-acid chain; its full sequence is uncharacterized protein (360 aa).

To P.multocida PM1082.

This is an uncharacterized protein from Pasteurella multocida (strain Pm70).